A 186-amino-acid chain; its full sequence is Elongation factor P (186 aa).

Belongs to the elongation factor P family.

The protein resides in the cytoplasm. It participates in protein biosynthesis; polypeptide chain elongation. In terms of biological role, involved in peptide bond synthesis. Stimulates efficient translation and peptide-bond synthesis on native or reconstituted 70S ribosomes in vitro. Probably functions indirectly by altering the affinity of the ribosome for aminoacyl-tRNA, thus increasing their reactivity as acceptors for peptidyl transferase. The sequence is that of Elongation factor P from Prochlorococcus marinus (strain MIT 9303).